A 246-amino-acid chain; its full sequence is Pyridoxine 5'-phosphate synthase (246 aa).

3-amino-2-oxopropyl phosphate-binding residues include Asn-8 and Arg-19. His-44 functions as the Proton acceptor in the catalytic mechanism. 1-deoxy-D-xylulose 5-phosphate contacts are provided by Arg-46 and His-51. Residue Glu-76 is the Proton acceptor of the active site. Residue Thr-106 coordinates 1-deoxy-D-xylulose 5-phosphate. The active-site Proton donor is the His-198. Residues Asp-199 and 221–222 (GH) contribute to the 3-amino-2-oxopropyl phosphate site.

It belongs to the PNP synthase family. Homooctamer; tetramer of dimers.

The protein localises to the cytoplasm. It catalyses the reaction 3-amino-2-oxopropyl phosphate + 1-deoxy-D-xylulose 5-phosphate = pyridoxine 5'-phosphate + phosphate + 2 H2O + H(+). It participates in cofactor biosynthesis; pyridoxine 5'-phosphate biosynthesis; pyridoxine 5'-phosphate from D-erythrose 4-phosphate: step 5/5. Its function is as follows. Catalyzes the complicated ring closure reaction between the two acyclic compounds 1-deoxy-D-xylulose-5-phosphate (DXP) and 3-amino-2-oxopropyl phosphate (1-amino-acetone-3-phosphate or AAP) to form pyridoxine 5'-phosphate (PNP) and inorganic phosphate. In Mesorhizobium japonicum (strain LMG 29417 / CECT 9101 / MAFF 303099) (Mesorhizobium loti (strain MAFF 303099)), this protein is Pyridoxine 5'-phosphate synthase.